Consider the following 103-residue polypeptide: uncharacterized protein (103 aa).

Its subcellular location is the mitochondrion. This is an uncharacterized protein from Claviceps purpurea (Ergot fungus).